The sequence spans 492 residues: N-succinylglutamate 5-semialdehyde dehydrogenase (492 aa).

220–225 (GSANTG) contacts NAD(+). Active-site residues include E243 and C277.

Belongs to the aldehyde dehydrogenase family. AstD subfamily.

It catalyses the reaction N-succinyl-L-glutamate 5-semialdehyde + NAD(+) + H2O = N-succinyl-L-glutamate + NADH + 2 H(+). It functions in the pathway amino-acid degradation; L-arginine degradation via AST pathway; L-glutamate and succinate from L-arginine: step 4/5. Its function is as follows. Catalyzes the NAD-dependent reduction of succinylglutamate semialdehyde into succinylglutamate. This chain is N-succinylglutamate 5-semialdehyde dehydrogenase, found in Escherichia coli O6:K15:H31 (strain 536 / UPEC).